The sequence spans 443 residues: ATP-dependent protease ATPase subunit HslU (443 aa).

ATP is bound by residues I19, 61–66 (GVGKTE), D256, E321, and R393.

Belongs to the ClpX chaperone family. HslU subfamily. A double ring-shaped homohexamer of HslV is capped on each side by a ring-shaped HslU homohexamer. The assembly of the HslU/HslV complex is dependent on binding of ATP.

The protein resides in the cytoplasm. Its function is as follows. ATPase subunit of a proteasome-like degradation complex; this subunit has chaperone activity. The binding of ATP and its subsequent hydrolysis by HslU are essential for unfolding of protein substrates subsequently hydrolyzed by HslV. HslU recognizes the N-terminal part of its protein substrates and unfolds these before they are guided to HslV for hydrolysis. The sequence is that of ATP-dependent protease ATPase subunit HslU from Ralstonia pickettii (strain 12J).